We begin with the raw amino-acid sequence, 287 residues long: RxLR effector protein Avr4 (287 aa).

Residues 1 to 24 form the signal peptide; that stretch reads MRSLHILLVFTASLLASLTESAKA. Residues 42-55 carry the RxLR-dEER motif; it reads RFLRAQTDEKNEER. The W1 motif stretch occupies residues 115 to 138; that stretch reads KYERMQWQKLKEGETLTFMRLGDR. The tract at residues 148 to 171 is W2 motif; that stretch reads QLLRWVAQKKPVESVYDDLQVAGF. Positions 221–244 are W3 motif; that stretch reads LFEKWAMEGTHIKSVITTLKLNGK. The tract at residues 246-267 is y motif; the sequence is ASEMANNENFPALLKYVKLYLD.

It belongs to the RxLR effector family.

Its subcellular location is the secreted. It localises to the host cytoplasm. The protein localises to the host nucleus. The protein resides in the host nucleolus. It is found in the host cytoskeleton. In terms of biological role, secreted effector that acts as an elicitor of hypersensitive response (HR) specifically on plants carrying defense protein R4, through its interaction with this protein. The sequence is that of RxLR effector protein Avr4 from Phytophthora infestans (strain T30-4) (Potato late blight agent).